Reading from the N-terminus, the 127-residue chain is Large ribosomal subunit protein bL12 (127 aa).

This sequence belongs to the bacterial ribosomal protein bL12 family. In terms of assembly, homodimer. Part of the ribosomal stalk of the 50S ribosomal subunit. Forms a multimeric L10(L12)X complex, where L10 forms an elongated spine to which 2 to 4 L12 dimers bind in a sequential fashion. Binds GTP-bound translation factors.

Its function is as follows. Forms part of the ribosomal stalk which helps the ribosome interact with GTP-bound translation factors. Is thus essential for accurate translation. The protein is Large ribosomal subunit protein bL12 of Syntrophobacter fumaroxidans (strain DSM 10017 / MPOB).